The following is a 67-amino-acid chain: Conotoxin Cl6.8 (67 aa).

The first 22 residues, 1–22 (MKVTAVLMVAVLVLTACQLTTA), serve as a signal peptide directing secretion. A propeptide spanning residues 23 to 39 (NTTDYVRRILARKSTMS) is cleaved from the precursor. 3 disulfide bridges follow: C43-C58, C50-C62, and C57-C66. At C66 the chain carries Cysteine amide.

This sequence belongs to the conotoxin O1 superfamily. Expressed by the venom duct.

The protein resides in the secreted. This Californiconus californicus (California cone) protein is Conotoxin Cl6.8.